A 119-amino-acid polypeptide reads, in one-letter code: Large ribosomal subunit protein uL18 (119 aa).

The protein belongs to the universal ribosomal protein uL18 family. Part of the 50S ribosomal subunit; part of the 5S rRNA/L5/L18/L25 subcomplex. Contacts the 5S and 23S rRNAs.

Its function is as follows. This is one of the proteins that bind and probably mediate the attachment of the 5S RNA into the large ribosomal subunit, where it forms part of the central protuberance. The polypeptide is Large ribosomal subunit protein uL18 (Lactobacillus johnsonii (strain CNCM I-12250 / La1 / NCC 533)).